A 246-amino-acid polypeptide reads, in one-letter code: Phosphomannomutase 2 (246 aa).

An N-acetylalanine modification is found at Ala2. Asp12 serves as the catalytic Nucleophile. Residues Asp12 and Asp14 each coordinate Mg(2+). Catalysis depends on Asp14, which acts as the Proton donor/acceptor. Alpha-D-mannose 1-phosphate contacts are provided by Arg21, Arg123, Arg134, and Arg141. Lys149 is subject to N6-acetyllysine. Alpha-D-mannose 1-phosphate is bound by residues Ser179 and Asp181. Asp209, Phe221, Asp223, and Thr226 together coordinate Mg(2+).

It belongs to the eukaryotic PMM family. Homodimer.

The protein resides in the cytoplasm. The catalysed reaction is alpha-D-mannose 1-phosphate = D-mannose 6-phosphate. Its pathway is nucleotide-sugar biosynthesis; GDP-alpha-D-mannose biosynthesis; alpha-D-mannose 1-phosphate from D-fructose 6-phosphate: step 2/2. Functionally, involved in the synthesis of the GDP-mannose and dolichol-phosphate-mannose required for a number of critical mannosyl transfer reactions. This chain is Phosphomannomutase 2 (PMM2), found in Homo sapiens (Human).